A 462-amino-acid chain; its full sequence is Cysteine--tRNA ligase (462 aa).

Cys30 serves as a coordination point for Zn(2+). The short motif at 32–42 (MTVYDYCHIGH) is the 'HIGH' region element. Residues Cys214, His239, and Glu243 each contribute to the Zn(2+) site. Residues 271 to 275 (KMSKS) carry the 'KMSKS' region motif. Lys274 serves as a coordination point for ATP.

This sequence belongs to the class-I aminoacyl-tRNA synthetase family. Monomer. Zn(2+) serves as cofactor.

Its subcellular location is the cytoplasm. The catalysed reaction is tRNA(Cys) + L-cysteine + ATP = L-cysteinyl-tRNA(Cys) + AMP + diphosphate. The protein is Cysteine--tRNA ligase of Herminiimonas arsenicoxydans.